The sequence spans 346 residues: Upstream stimulatory factor 2 (346 aa).

2 disordered regions span residues 1–44 and 215–244; these read MDML…PGAE and APRT…NEVE. Residues 11–20 are compositionally biased toward low complexity; it reads ASSATAAAAA. The segment covering 226 to 244 has biased composition (basic and acidic residues); the sequence is DGTRTPRDERRRAQHNEVE. The 56-residue stretch at 235–290 folds into the bHLH domain; that stretch reads RRRAQHNEVERRRRDKINNWIVQLSKIIPDCHADNSKTGASKGGILSKACDYIREL. The leucine-zipper stretch occupies residues 307-328; the sequence is LQMDNELLRQQIEELKNENALL.

As to quaternary structure, efficient DNA binding requires dimerization with another bHLH protein. Binds DNA as a homodimer or a heterodimer (USF1/USF2). Interacts with MAF.

Its subcellular location is the nucleus. Its function is as follows. Transcription factor that binds to a symmetrical DNA sequence (E-boxes) (5'-CACGTG-3') that is found in a variety of viral and cellular promoters. The protein is Upstream stimulatory factor 2 (Usf2) of Mus musculus (Mouse).